Consider the following 447-residue polypeptide: ATP-dependent protease ATPase subunit HslU (447 aa).

Residues isoleucine 18, 60-65 (GVGKTE), aspartate 259, glutamate 325, and arginine 397 each bind ATP.

It belongs to the ClpX chaperone family. HslU subfamily. In terms of assembly, a double ring-shaped homohexamer of HslV is capped on each side by a ring-shaped HslU homohexamer. The assembly of the HslU/HslV complex is dependent on binding of ATP.

It localises to the cytoplasm. ATPase subunit of a proteasome-like degradation complex; this subunit has chaperone activity. The binding of ATP and its subsequent hydrolysis by HslU are essential for unfolding of protein substrates subsequently hydrolyzed by HslV. HslU recognizes the N-terminal part of its protein substrates and unfolds these before they are guided to HslV for hydrolysis. The polypeptide is ATP-dependent protease ATPase subunit HslU (Burkholderia pseudomallei (strain K96243)).